Reading from the N-terminus, the 149-residue chain is Protein E6 (149 aa).

2 zinc fingers span residues 30 to 66 (CVEC…CKVC) and 103 to 139 (CIIC…CAVC). The short motif at 147 to 149 (TQV) is the PDZ-binding domain element.

Belongs to the papillomaviridae E6 protein family. Forms homodimers. Interacts with ubiquitin-protein ligase UBE3A/E6-AP and thus forms a complex with human TP53. Interacts with human NFX1 and MAGI3. Interacts with human IRF3; this interaction inhibits the establishment of antiviral state. Interacts with human TYK2; this interaction inhibits JAK-STAT activation by interferon alpha. Interacts with host DLG1; this interaction leads to the proteasomal degradation of DLG1.

Its subcellular location is the host cytoplasm. It localises to the host nucleus. In terms of biological role, plays a major role in the induction and maintenance of cellular transformation. Acts mainly as an oncoprotein by stimulating the destruction of many host cell key regulatory proteins. E6 associates with host UBE3A/E6-AP ubiquitin-protein ligase, and inactivates tumor suppressors TP53 and TP73 by targeting them to the 26S proteasome for degradation. In turn, DNA damage and chromosomal instabilities increase and lead to cell proliferation and cancer development. The complex E6/E6AP targets several other substrates to degradation via the proteasome including host DLG1 or NFX1, a repressor of human telomerase reverse transcriptase (hTERT). The resulting increased expression of hTERT prevents the shortening of telomere length leading to cell immortalization. Other cellular targets including BAK1, Fas-associated death domain-containing protein (FADD) and procaspase 8, are degraded by E6/E6AP causing inhibition of apoptosis. E6 also inhibits immune response by interacting with host IRF3 and TYK2. These interactions prevent IRF3 transcriptional activities and inhibit TYK2-mediated JAK-STAT activation by interferon alpha resulting in inhibition of the interferon signaling pathway. This is Protein E6 from Human papillomavirus 58.